The sequence spans 138 residues: ATP synthase epsilon chain (138 aa).

Residues 88 to 119 form a disordered region; the sequence is DREEARSTLSAAQARLDQSEQSEDKQERYEAQ. Residues 109-119 show a composition bias toward basic and acidic residues; that stretch reads SEDKQERYEAQ.

The protein belongs to the ATPase epsilon chain family. F-type ATPases have 2 components, CF(1) - the catalytic core - and CF(0) - the membrane proton channel. CF(1) has five subunits: alpha(3), beta(3), gamma(1), delta(1), epsilon(1). CF(0) has three main subunits: a, b and c.

It localises to the cellular thylakoid membrane. Produces ATP from ADP in the presence of a proton gradient across the membrane. The sequence is that of ATP synthase epsilon chain from Acaryochloris marina (strain MBIC 11017).